The sequence spans 90 residues: Probable Fe(2+)-trafficking protein (90 aa).

This sequence belongs to the Fe(2+)-trafficking protein family.

In terms of biological role, could be a mediator in iron transactions between iron acquisition and iron-requiring processes, such as synthesis and/or repair of Fe-S clusters in biosynthetic enzymes. This Actinobacillus succinogenes (strain ATCC 55618 / DSM 22257 / CCUG 43843 / 130Z) protein is Probable Fe(2+)-trafficking protein.